The sequence spans 502 residues: ATP synthase subunit alpha (502 aa).

An ATP-binding site is contributed by glycine 169–threonine 176.

The protein belongs to the ATPase alpha/beta chains family. As to quaternary structure, F-type ATPases have 2 components, CF(1) - the catalytic core - and CF(0) - the membrane proton channel. CF(1) has five subunits: alpha(3), beta(3), gamma(1), delta(1), epsilon(1). CF(0) has three main subunits: a(1), b(2) and c(9-12). The alpha and beta chains form an alternating ring which encloses part of the gamma chain. CF(1) is attached to CF(0) by a central stalk formed by the gamma and epsilon chains, while a peripheral stalk is formed by the delta and b chains.

It localises to the cell membrane. The enzyme catalyses ATP + H2O + 4 H(+)(in) = ADP + phosphate + 5 H(+)(out). In terms of biological role, produces ATP from ADP in the presence of a proton gradient across the membrane. The alpha chain is a regulatory subunit. The polypeptide is ATP synthase subunit alpha (Lysinibacillus sphaericus (strain C3-41)).